Reading from the N-terminus, the 172-residue chain is Small ribosomal subunit protein uS5c (172 aa).

Residues 15 to 78 (WEEKVVQVKR…TDAKKHIINV (64 aa)) form the S5 DRBM domain.

This sequence belongs to the universal ribosomal protein uS5 family. In terms of assembly, part of the 30S ribosomal subunit. Contacts protein S4.

The protein localises to the plastid. It is found in the chloroplast. Functionally, with S4 and S12 plays an important role in translational accuracy. This Gracilaria tenuistipitata var. liui (Red alga) protein is Small ribosomal subunit protein uS5c (rps5).